Here is a 517-residue protein sequence, read N- to C-terminus: MLNEPNALLRRDANSTIATVTELFPNEYSNADIAYVLLSTVVVFTVTPGIALYYAGMVRKNSALSILTQSFLVTAVVFIQWYLFGYSLACSSGSSFYGTLWQGGMNHLWLEPYIPGSTIPAIVYFPFGGLFAVATAQLFAGAMAERGRLIPSLVISFLYITLVYCPQAYWTWAPNGWLYTLGALDFAGGGPVHISSGFAALAYSLCLGRRIVVDEPDRPDSIRSTDNADLPSSSQNNCKANWKRWFGFKSVSWKNSFGRGKIAHNPPHDAGMVYIGVVLIWFAWLCFNSGTLLTVNIRTAYIMTNTLISSSFGALTWAIIDYIRYRKFSTIGICEGAIAGLVGITPACGFVFPWGAAAGGIVPALVCNFLHDLNEWIGVDETLRVFNLHGIGGIVGSIVLGVVAHPDVAASDGATVIDGGWAVHHWKQMGYQFAGFTSVAAWSFVITAIICLLVDLVPGLHIRASFEEELRGMDFVELEEQLPGQTLESKPMIIYAQEMDEPVTQGSNIKQEKQDEF.

Over 1-32 (MLNEPNALLRRDANSTIATVTELFPNEYSNAD) the chain is Extracellular. A helical membrane pass occupies residues 33 to 53 (IAYVLLSTVVVFTVTPGIALY). Topologically, residues 54–69 (YAGMVRKNSALSILTQ) are cytoplasmic. A helical membrane pass occupies residues 70–90 (SFLVTAVVFIQWYLFGYSLAC). The Extracellular portion of the chain corresponds to 91–118 (SSGSSFYGTLWQGGMNHLWLEPYIPGST). Residues 119–139 (IPAIVYFPFGGLFAVATAQLF) form a helical membrane-spanning segment. Topologically, residues 140–148 (AGAMAERGR) are cytoplasmic. The helical transmembrane segment at 149 to 169 (LIPSLVISFLYITLVYCPQAY) threads the bilayer. Residues 170–180 (WTWAPNGWLYT) are Extracellular-facing. The helical transmembrane segment at 181 to 201 (LGALDFAGGGPVHISSGFAAL) threads the bilayer. Over 202 to 272 (AYSLCLGRRI…AHNPPHDAGM (71 aa)) the chain is Cytoplasmic. A helical membrane pass occupies residues 273–293 (VYIGVVLIWFAWLCFNSGTLL). Topologically, residues 294-299 (TVNIRT) are extracellular. The helical transmembrane segment at 300–320 (AYIMTNTLISSSFGALTWAII) threads the bilayer. The Cytoplasmic portion of the chain corresponds to 321-327 (DYIRYRK). Residues 328 to 348 (FSTIGICEGAIAGLVGITPAC) form a helical membrane-spanning segment. Residue G349 is a topological domain, extracellular. The chain crosses the membrane as a helical span at residues 350–370 (FVFPWGAAAGGIVPALVCNFL). Residues 371–384 (HDLNEWIGVDETLR) lie on the Cytoplasmic side of the membrane. The chain crosses the membrane as a helical span at residues 385–405 (VFNLHGIGGIVGSIVLGVVAH). Residues 406–432 (PDVAASDGATVIDGGWAVHHWKQMGYQ) lie on the Extracellular side of the membrane. A helical membrane pass occupies residues 433–453 (FAGFTSVAAWSFVITAIICLL). Topologically, residues 454 to 517 (VDLVPGLHIR…NIKQEKQDEF (64 aa)) are cytoplasmic.

This sequence belongs to the ammonia transporter channel (TC 1.A.11.2) family.

Its subcellular location is the membrane. In terms of biological role, transporter for ammonium to use as a nitrogen source. This Schizosaccharomyces pombe (strain 972 / ATCC 24843) (Fission yeast) protein is Ammonium transporter 3 (amt3).